Reading from the N-terminus, the 437-residue chain is Integrase (437 aa).

The Core-binding (CB) domain occupies 73 to 158 (WTVERWLTHW…TARTAFGEAY (86 aa)). The Tyr recombinase domain occupies 179–428 (EEVEPLEVED…DSVRNDVADR (250 aa)). Active-site residues include arginine 214, lysine 245, histidine 379, arginine 382, and tryptophan 405. Tyrosine 414 (O-(3'-phospho-DNA)-tyrosine intermediate) is an active-site residue.

The protein belongs to the 'phage' integrase family.

Is a recombinase (or integrase), catalyzing the cutting and rejoining of the recombining DNA molecules. The chain is Integrase (int) from Saccharopolyspora erythraea (Streptomyces erythraeus).